The primary structure comprises 161 residues: Phosphopantetheine adenylyltransferase (161 aa).

A substrate-binding site is contributed by S8. Residues 8-9 (SF) and H16 contribute to the ATP site. 3 residues coordinate substrate: K40, L72, and R86. ATP contacts are provided by residues 87-89 (GLR), E97, and 122-128 (FSFVSSS).

This sequence belongs to the bacterial CoaD family. Homohexamer. Mg(2+) serves as cofactor.

It localises to the cytoplasm. The enzyme catalyses (R)-4'-phosphopantetheine + ATP + H(+) = 3'-dephospho-CoA + diphosphate. Its pathway is cofactor biosynthesis; coenzyme A biosynthesis; CoA from (R)-pantothenate: step 4/5. Its function is as follows. Reversibly transfers an adenylyl group from ATP to 4'-phosphopantetheine, yielding dephospho-CoA (dPCoA) and pyrophosphate. This Thermotoga neapolitana (strain ATCC 49049 / DSM 4359 / NBRC 107923 / NS-E) protein is Phosphopantetheine adenylyltransferase.